A 342-amino-acid chain; its full sequence is AM-toxin biosynthesis protein 12 (342 aa).

An N-terminal signal peptide occupies residues 1-20 (MSLLITSLAWGALLDPEVSS).

Its pathway is mycotoxin biosynthesis. Functionally, part of the gene clusters that mediate the biosynthesis of AM-toxins, host-selective toxins (HSTs) causing Alternaria blotch on apple, a worldwide distributed disease. AM-toxins are cyclic depsipeptides containing the 3 residues 2-hydroxy-isovaleric acid (2-HIV), dehydroalanine, L-alanine which are common for all 3 AM-toxins I to III. The fourth precursor is L-alpha-amino-methoxyphenyl-valeric acid (L-Amv) for AM-toxin I, L-alpha-amino-phenyl-valeric acid (L-Apv) for AM-toxin II, and L-alpha-amino-hydroxyphenyl-valeric acid (L-Ahv) for AM-toxin III. AM-toxins have two target sites for affecting susceptible apple cells; they cause invagination of the plasma membrane and electrolyte loss and chloroplast disorganization. The non-ribosomal peptide synthetase AMT1 contains 4 catalytic modules and is responsible for activation of each residue in AM-toxin. The aldo-keto reductase AMT2 catalyzes the conversion of 2-keto-isovaleric acid (2-KIV) to 2-hydroxy-isovaleric acid (2-HIV), one of the precursor residues incorporated by AMT1 during AM-toxin biosynthesis, by reduction of its ketone to an alcohol. The cytochrome P450 monooxygenase AMT3 and the thioesterase AMT4 are also important for AM-toxin production, but their exact function within the AM-toxin biosynthesis are not known yet. Up to 21 proteins (including AMT1 to AMT4) are predicted to be involved in AM-toxin biosynthesis since their expression ishighly up-regulated in AM-toxin-producing cultures. The polypeptide is AM-toxin biosynthesis protein 12 (Alternaria alternata (Alternaria rot fungus)).